Here is a 426-residue protein sequence, read N- to C-terminus: 3-isopropylmalate dehydratase large subunit (426 aa).

The [4Fe-4S] cluster site is built by Cys307, Cys367, and Cys370.

The protein belongs to the aconitase/IPM isomerase family. LeuC type 2 subfamily. In terms of assembly, heterodimer of LeuC and LeuD. [4Fe-4S] cluster serves as cofactor.

The enzyme catalyses (2R,3S)-3-isopropylmalate = (2S)-2-isopropylmalate. It participates in amino-acid biosynthesis; L-leucine biosynthesis; L-leucine from 3-methyl-2-oxobutanoate: step 2/4. In terms of biological role, catalyzes the isomerization between 2-isopropylmalate and 3-isopropylmalate, via the formation of 2-isopropylmaleate. This is 3-isopropylmalate dehydratase large subunit from Aliarcobacter butzleri (strain RM4018) (Arcobacter butzleri).